The sequence spans 249 residues: Transmembrane protein 106C (249 aa).

Positions 1-26 are disordered; the sequence is MGSRHSTYAHRPFSKRRKADDTEDSL. Residue glycine 2 is the site of N-myristoyl glycine attachment. The next 2 membrane-spanning stretches (helical) occupy residues 86–106 and 197–217; these read YVLLSILLCLLASGLVVFFLF and SYVYFFCTLPYIGVHNVVVFV.

The protein belongs to the TMEM106 family. As to quaternary structure, interacts with TMEM106B.

The protein resides in the endoplasmic reticulum membrane. It localises to the membrane. This Bos taurus (Bovine) protein is Transmembrane protein 106C (TMEM106C).